The primary structure comprises 316 residues: tRNA dimethylallyltransferase (316 aa).

17-24 (GPTASGKT) lines the ATP pocket. 19-24 (TASGKT) contributes to the substrate binding site. Interaction with substrate tRNA stretches follow at residues 42–45 (DSAL), 166–170 (QRLSR), and 247–252 (RCVGYR).

This sequence belongs to the IPP transferase family. In terms of assembly, monomer. Mg(2+) serves as cofactor.

The enzyme catalyses adenosine(37) in tRNA + dimethylallyl diphosphate = N(6)-dimethylallyladenosine(37) in tRNA + diphosphate. Functionally, catalyzes the transfer of a dimethylallyl group onto the adenine at position 37 in tRNAs that read codons beginning with uridine, leading to the formation of N6-(dimethylallyl)adenosine (i(6)A). This Salmonella typhi protein is tRNA dimethylallyltransferase.